A 501-amino-acid chain; its full sequence is GDP-fucose protein O-fucosyltransferase 4 (501 aa).

Residues 1–10 (MLLQMAGRGK) are Cytoplasmic-facing. A helical; Signal-anchor for type II membrane protein membrane pass occupies residues 11-31 (MVPCVCLGLLGVLCWVWVSFA). At 32–501 (SFPDEQLSLG…MAVRRARGKN (470 aa)) the chain is on the lumenal side. N-linked (GlcNAc...) asparagine glycosylation is present at Asn-173. Cys-396 and Cys-399 are joined by a disulfide. Asn-428 and Asn-478 each carry an N-linked (GlcNAc...) asparagine glycan.

Belongs to the glycosyltransferase 10 family.

It localises to the endoplasmic reticulum membrane. The enzyme catalyses L-threonyl-[protein] + GDP-beta-L-fucose = 3-O-(alpha-L-fucosyl)-L-threonyl-[protein] + GDP + H(+). The catalysed reaction is L-seryl-[protein] + GDP-beta-L-fucose = 3-O-(alpha-L-fucosyl)-L-seryl-[protein] + GDP + H(+). The protein operates within protein modification; protein glycosylation. Functionally, protein O-fucosyltransferase that specifically catalyzes O-fucosylation of serine or threonine residues in EMI domains of target proteins. Attaches fucose through an O-glycosidic linkage. O-fucosylation of EMI domain-containing proteins may be required for facilitating protein folding and secretion. The polypeptide is GDP-fucose protein O-fucosyltransferase 4 (fut11) (Takifugu rubripes (Japanese pufferfish)).